The chain runs to 457 residues: PDZ and LIM domain protein 7 (457 aa).

One can recognise a PDZ domain in the interval 1–85 (MDSFKVVLEG…RLSLGLSRAQ (85 aa)). A Phosphoserine modification is found at Ser78. Disordered stretches follow at residues 82-166 (SRAQ…QSRS) and 186-226 (FMKK…PWAV). Phosphothreonine is present on Thr96. Arg103 is subject to Asymmetric dimethylarginine. Residue Ser111 is modified to Phosphoserine. A compositionally biased stretch (polar residues) spans 126–135 (DSTLRQNGQL). Basic and acidic residues predominate over residues 144 to 157 (SKQRLMEDTEDWRP). Residue Ser247 is modified to Phosphoserine. LIM zinc-binding domains follow at residues 280-338 (PVCH…VRYA), 339-398 (PNCA…MFGT), and 399-457 (KCRG…FSHV).

In terms of assembly, specifically binds via its LIM zinc-binding 3 domain (LIM 3) domain to endocytic codes of INSR, but not with those of IGF1R, LDLR, TFRC, or EGFR. Interacts with various PKC isoforms through the LIM zinc-binding domains. Binds to RET in a phosphorylation-independent manner via its LIM zinc-binding domain 2 (LIM 2). Probably part of a complex with SHC and the RET dimer. Interacts with TPM2, TBX4 and TBX5.

The protein resides in the cytoplasm. Its subcellular location is the cytoskeleton. Its function is as follows. May function as a scaffold on which the coordinated assembly of proteins can occur. May play a role as an adapter that, via its PDZ domain, localizes LIM-binding proteins to actin filaments of both skeletal muscle and nonmuscle tissues. Involved in both of the two fundamental mechanisms of bone formation, direct bone formation (e.g. embryonic flat bones mandible and cranium), and endochondral bone formation (e.g. embryonic long bone development). Plays a role during fracture repair. Involved in BMP6 signaling pathway. The chain is PDZ and LIM domain protein 7 (Pdlim7) from Mus musculus (Mouse).